The sequence spans 4042 residues: Polyketide synthase-nonribosomal peptide synthetase ffsA (4042 aa).

The Ketosynthase family 3 (KS3) domain occupies Arg17–Ala453. Residues Cys190, His330, and His373 each act as for beta-ketoacyl synthase activity in the active site. Positions Val561–Asp878 are malonyl-CoA:ACP transacylase (MAT) domain. The segment at His950 to Pro1083 is N-terminal hotdog fold. The segment at His950–Thr1249 is dehydratase (DH) domain. A PKS/mFAS DH domain is found at His950–Ala1251. The Proton acceptor; for dehydratase activity role is filled by His982. The segment at Met1098 to Ala1251 is C-terminal hotdog fold. The active-site Proton donor; for dehydratase activity is Asp1158. Residues Asp1390 to Asp1613 form a methyltransferase (MT) domain region. The tract at residues Thr2116–Ile2289 is ketoreductase (KR)domain. A Carrier 1 domain is found at Glu2399–Leu2476. O-(pantetheine 4'-phosphoryl)serine is present on Ser2436. Residues Glu2515–Ile2601 form a disordered region. The segment covering Ala2520 to Pro2532 has biased composition (acidic residues). Residues Arg2629–Gln3061 are condensation. The segment at Glu3089–Arg3486 is adenylation. In terms of domain architecture, Carrier 2 spans Arg3607 to Ala3684. Residue Ser3644 is modified to O-(pantetheine 4'-phosphoryl)serine. The reductase-like domain stretch occupies residues Ile3750–Thr3971.

This sequence in the C-terminal section; belongs to the NRP synthetase family.

It functions in the pathway mycotoxin biosynthesis. Functionally, hybrid PKS-NRPS synthetase; part of the gene cluster that mediates the biosynthesis of the cytotoxic leucine-containing cytochalasans, including aspochalasin C, aspochalasin E, TMC-169, flavichalasine F, aspergillin PZ, aspochalasin M and flavichalasine G. The first step in the pathway is catalyzed by the hybrid PKS-NRPS ffsA that utilizes 8 units of malonyl-CoA to iteratively assemble the octaketide chain before addition of L-leucine by the C-terminal NRPS modules. Because ffsA lacks a designated enoylreductase (ER) domain, the required activity is provided the enoyl reductase fssC. The methyltransferase (MT) domain of ffsA catalyzes the alpha-methylation at C10 and C14 using S-adenosyl-L-methionine as the methyl-donating cosubstrate. Reduction by the hydrolyase ffsE, followed by dehydration and intra-molecular Diels-Alder cyclization by the Diels-Alderase ffsF then yield the required isoindolone-fused macrocycle. A number of oxidative steps catalyzed by the tailoring cytochrome P450 monooxygenase ffsD, the FAD-linked oxidoreductase ffsJ and the short-chain dehydrogenase/reductase ffsI, are further required to afford the final products. This Aspergillus flavipes protein is Polyketide synthase-nonribosomal peptide synthetase ffsA.